We begin with the raw amino-acid sequence, 124 residues long: Ribonuclease pancreatic (124 aa).

Over residues 1 to 15 (KESPAKKFQRQHMDP) the composition is skewed to basic and acidic residues. The disordered stretch occupies residues 1–24 (KESPAKKFQRQHMDPDSSSSNSSN). Lysine 7 and arginine 10 together coordinate substrate. The active-site Proton acceptor is histidine 12. 2 N-linked (GlcNAc...) asparagine glycosylation sites follow: asparagine 21 and asparagine 34. 4 cysteine pairs are disulfide-bonded: cysteine 26–cysteine 84, cysteine 40–cysteine 95, cysteine 58–cysteine 110, and cysteine 65–cysteine 72. Residues 41–45 (KPVNT) and lysine 66 contribute to the substrate site. The N-linked (GlcNAc...) asparagine glycan is linked to asparagine 76. Arginine 85 provides a ligand contact to substrate. Histidine 119 acts as the Proton donor in catalysis.

Belongs to the pancreatic ribonuclease family. Monomer. Interacts with and forms tight 1:1 complexes with RNH1. Dimerization of two such complexes may occur. Interaction with RNH1 inhibits this protein. In terms of tissue distribution, pancreas.

It is found in the secreted. The catalysed reaction is an [RNA] containing cytidine + H2O = an [RNA]-3'-cytidine-3'-phosphate + a 5'-hydroxy-ribonucleotide-3'-[RNA].. It carries out the reaction an [RNA] containing uridine + H2O = an [RNA]-3'-uridine-3'-phosphate + a 5'-hydroxy-ribonucleotide-3'-[RNA].. Endonuclease that catalyzes the cleavage of RNA on the 3' side of pyrimidine nucleotides. Acts on single-stranded and double-stranded RNA. The chain is Ribonuclease pancreatic (RNASE1) from Sus scrofa (Pig).